An 810-amino-acid polypeptide reads, in one-letter code: Protein kinase C-binding protein NELL1 (810 aa).

Positions 1 to 21 (MPMDLILVVWFCVCTARTVVG) are cleaved as a signal peptide. N-linked (GlcNAc...) asparagine glycosylation is found at Asn40, Asn53, Asn83, Asn224, Asn294, and Asn372. A Laminin G-like domain is found at 64-227 (EREIHAAPHV…TQCPNLNHTC (164 aa)). Residues 271–332 (KTCQVSGLLY…IAGQCCKVCR (62 aa)) form the VWFC 1 domain. 3 cysteine pairs are disulfide-bonded: Cys395–Cys407, Cys401–Cys416, and Cys418–Cys432. Positions 434, 435, and 437 each coordinate Ca(2+). The region spanning 434–475 (DIDECAAKMHYCHANTVCVNLPGLYRCDCVPGYIRVDDFSCT) is the EGF-like 1; calcium-binding domain. 15 cysteine pairs are disulfide-bonded: Cys438-Cys451, Cys445-Cys460, Cys462-Cys474, Cys480-Cys493, Cys487-Cys502, Cys504-Cys515, Cys519-Cys529, Cys523-Cys535, Cys537-Cys546, Cys553-Cys566, Cys560-Cys575, Cys577-Cys594, Cys600-Cys613, Cys607-Cys622, and Cys624-Cys630. 3 residues coordinate Ca(2+): Asn453, Leu454, and Leu457. The region spanning 476 to 516 (EHDECGSGQHNCDENAICTNTVQGHSCTCKPGYVGNGTICR) is the EGF-like 2; calcium-binding domain. An N-linked (GlcNAc...) asparagine glycan is attached at Asn511. The region spanning 517–547 (AFCEEGCRYGGTCVAPNKCVCPSGFTGSHCE) is the EGF-like 3 domain. An EGF-like 4; calcium-binding domain is found at 549–587 (DIDECSEGIIECHNHSRCVNLPGWYHCECRSGFHDDGTY). Residue Asn562 is glycosylated (N-linked (GlcNAc...) asparagine). The EGF-like 5; calcium-binding domain occupies 596–631 (DIDECALRTHTCWNDSACINLAGGFDCLCPSGPSCS). N-linked (GlcNAc...) asparagine glycosylation occurs at Asn609. The VWFC 2 domain occupies 692-750 (SQCLDQNGHKLYRSGDNWTHSCQQCRCLEGEVDCWPLTCPNLSCEYTAILEGECCPRCV). Residues Asn708, Asn732, and Asn758 are each glycosylated (N-linked (GlcNAc...) asparagine).

Homotrimer. Binds to PKC beta-1. Interacts with ATRAID; the interaction promotes osteoblast cell differentiation and mineralization. Interacts with ROBO3.

The protein localises to the cytoplasm. It localises to the nucleus envelope. It is found in the secreted. Plays a role in the control of cell growth and differentiation. Promotes osteoblast cell differentiation and terminal mineralization. This Homo sapiens (Human) protein is Protein kinase C-binding protein NELL1 (NELL1).